The primary structure comprises 135 residues: Cilia- and flagella-associated protein 144 (135 aa).

Residues 76–100 (QGPKKKYSETQTEAQEIGWDPNPLI) are disordered.

This sequence belongs to the CFAP144 family. As to quaternary structure, microtubule inner protein component of sperm flagellar doublet microtubules. As to expression, predominantly expressed in tissues containing motile cilia.

The protein localises to the cytoplasm. It is found in the cytoskeleton. It localises to the cilium axoneme. Its subcellular location is the flagellum axoneme. In Mus musculus (Mouse), this protein is Cilia- and flagella-associated protein 144.